A 234-amino-acid polypeptide reads, in one-letter code: LexA repressor (234 aa).

Basic and acidic residues predominate over residues 1-11 (MNEATSHEGPK). Positions 1–34 (MNEATSHEGPKRSLPGRPPGIRADSSGLTDRQRR) are disordered. Positions 52-72 (MREIGQAVGLSSTSSVAHQLM) form a DNA-binding region, H-T-H motif. Over residues 83–94 (DPHRPRAYEVRG) the composition is skewed to basic and acidic residues. The disordered stretch occupies residues 83 to 109 (DPHRPRAYEVRGSDQSSSVQPTDTAGK). Positions 95–105 (SDQSSSVQPTD) are enriched in polar residues. Active-site for autocatalytic cleavage activity residues include Ser-158 and Lys-195.

This sequence belongs to the peptidase S24 family. In terms of assembly, homodimer.

The catalysed reaction is Hydrolysis of Ala-|-Gly bond in repressor LexA.. In terms of biological role, represses a number of genes involved in the response to DNA damage (SOS response), including recA and lexA. In the presence of single-stranded DNA, RecA interacts with LexA causing an autocatalytic cleavage which disrupts the DNA-binding part of LexA, leading to derepression of the SOS regulon and eventually DNA repair. The protein is LexA repressor of Streptomyces avermitilis (strain ATCC 31267 / DSM 46492 / JCM 5070 / NBRC 14893 / NCIMB 12804 / NRRL 8165 / MA-4680).